Reading from the N-terminus, the 300-residue chain is Cation-efflux pump FieF (300 aa).

The helical transmembrane segment at 24 to 44 (LLIKIFAWWYTGSVSILAALV) threads the bilayer. Aspartate 45 and aspartate 49 together coordinate Zn(2+). A run of 2 helical transmembrane segments spans residues 82–102 (AALA…LTGI) and 114–134 (AGVG…LVTF). 2 residues coordinate Zn(2+): histidine 153 and aspartate 157. Helical transmembrane passes span 156–176 (SDVM…YGWH) and 178–198 (ADAL…LRMG).

It belongs to the cation diffusion facilitator (CDF) transporter (TC 2.A.4) family. FieF subfamily. In terms of assembly, homodimer.

The protein localises to the cell inner membrane. It catalyses the reaction Zn(2+)(in) + H(+)(out) = Zn(2+)(out) + H(+)(in). The enzyme catalyses Cd(2+)(in) + H(+)(out) = Cd(2+)(out) + H(+)(in). It carries out the reaction Fe(2+)(in) + H(+)(out) = Fe(2+)(out) + H(+)(in). Functionally, divalent metal cation transporter which exports Zn(2+), Cd(2+) and possibly Fe(2+). May be involved in zinc and iron detoxification by efflux. In Klebsiella pneumoniae (strain 342), this protein is Cation-efflux pump FieF.